Here is a 346-residue protein sequence, read N- to C-terminus: Short-wave-sensitive opsin 1 (346 aa).

The Extracellular segment spans residues 1–31 (MSGEDEFYLFQNISSVGPWDGPQYHIAPVWA). A glycan (N-linked (GlcNAc...) asparagine) is linked at Asn-12. The helical transmembrane segment at 32–56 (FHLQAAFMGFVFFAGTPLNATVLVA) threads the bilayer. Residues 57–68 (TLHYKKLRQPLN) are Cytoplasmic-facing. Residues 69-94 (YILVNVSLGGFLFCIFSVFTVFIASC) traverse the membrane as a helical segment. Residues 95-108 (HGYFLFGRHVCALE) lie on the Extracellular side of the membrane. A disulfide bond links Cys-105 and Cys-182. The helical transmembrane segment at 109–128 (AFLGSVAGLVTGWSLAFLAF) threads the bilayer. The Cytoplasmic portion of the chain corresponds to 129–147 (ERYLVICKPFGNIRFNSKH). A helical transmembrane segment spans residues 148–171 (ALTVVLITWTIGIGVSIPPFFGWS). Topologically, residues 172-197 (RFIPEGLQCSCGPDWYTVGTKYRSEH) are extracellular. The helical transmembrane segment at 198 to 225 (YTWFLFIFCFIIPLSLICFSYFQLLRTL) threads the bilayer. At 226-247 (RAVAAQQQESATTQKAEREVSH) the chain is on the cytoplasmic side. Residues 248 to 271 (MVVVMVGSFCLCYVPYAALAMYMV) form a helical membrane-spanning segment. Topologically, residues 272–279 (NNRNHGLY) are extracellular. The helical transmembrane segment at 280–304 (LRLVTIPAFFSKSSCVYNPIIYCFM) threads the bilayer. Lys-291 carries the N6-(retinylidene)lysine modification. Residues 305-346 (NKQFRACILEMVCRKPMTDESDMSGSQKTEVSTVSSSKVGPH) are Cytoplasmic-facing. The disordered stretch occupies residues 322–346 (TDESDMSGSQKTEVSTVSSSKVGPH). Residues 330–346 (SQKTEVSTVSSSKVGPH) show a composition bias toward low complexity.

It belongs to the G-protein coupled receptor 1 family. Opsin subfamily. Post-translationally, phosphorylated on some or all of the serine and threonine residues present in the C-terminal region. In terms of tissue distribution, expressed in cone photoreceptor cells.

It localises to the cell membrane. Its subcellular location is the photoreceptor inner segment. The protein resides in the cell projection. The protein localises to the cilium. It is found in the photoreceptor outer segment. It localises to the cytoplasm. Its subcellular location is the perinuclear region. Functionally, visual pigments are the light-absorbing molecules that mediate vision. They consist of an apoprotein, opsin, covalently linked to cis-retinal. Required for the maintenance of cone outer segment organization in the ventral retina, but not essential for the maintenance of functioning cone photoreceptors. Involved in ensuring correct abundance and localization of retinal membrane proteins. May increase spectral sensitivity in dim light. This is Short-wave-sensitive opsin 1 (Opn1sw) from Rattus norvegicus (Rat).